Reading from the N-terminus, the 86-residue chain is Insulin (86 aa).

3 disulfides stabilise this stretch: C7–C72, C19–C85, and C71–C76. The propeptide at E33–Q63 is c peptide.

It belongs to the insulin family. As to quaternary structure, heterodimer of a B chain and an A chain linked by two disulfide bonds.

It localises to the secreted. Functionally, insulin decreases blood glucose concentration. It increases cell permeability to monosaccharides, amino acids and fatty acids. It accelerates glycolysis, the pentose phosphate cycle, and glycogen synthesis in liver. The chain is Insulin (INS) from Equus caballus (Horse).